The chain runs to 95 residues: UPF0235 protein Pcar_0617 (95 aa).

This sequence belongs to the UPF0235 family.

In Syntrophotalea carbinolica (strain DSM 2380 / NBRC 103641 / GraBd1) (Pelobacter carbinolicus), this protein is UPF0235 protein Pcar_0617.